The following is a 349-amino-acid chain: Farnesyl pyrophosphate synthase vrtD (349 aa).

Residues lysine 53, arginine 56, and glutamine 92 each coordinate isopentenyl diphosphate. Residues aspartate 99 and aspartate 103 each coordinate Mg(2+). Residue arginine 108 participates in dimethylallyl diphosphate binding. An isopentenyl diphosphate-binding site is contributed by arginine 109. Dimethylallyl diphosphate is bound by residues lysine 196, threonine 197, glutamine 236, lysine 253, and lysine 262.

Belongs to the FPP/GGPP synthase family. Mg(2+) serves as cofactor.

It carries out the reaction isopentenyl diphosphate + dimethylallyl diphosphate = (2E)-geranyl diphosphate + diphosphate. The catalysed reaction is isopentenyl diphosphate + (2E)-geranyl diphosphate = (2E,6E)-farnesyl diphosphate + diphosphate. It functions in the pathway secondary metabolite biosynthesis; terpenoid biosynthesis. Its function is as follows. Farnesyl pyrophosphate synthase; part of the gene cluster that mediates the biosynthesis of viridicatumtoxin, a tetracycline-like fungal meroterpenoid with a unique, fused spirobicyclic ring system. The first step of the pathway is the production of the malonamoyl-CoA starter unit for the polyketide synthase vrtA. The aldolase vrtJ may be involved in the synthesis of the malonamate substrate for malonamoyl-CoA synthetase vrtB. The polyketide synthase vrtA then may utilize the malonamoyl-CoA starter unit, followed by sequential condensation of eight malonyl-CoA units to form the polyketide backbone. The cyclization of the last ring could be mediated by the lactamase-like protein vrtG. The proposed post-PKS tailoring steps are a hydroxylation at C5 catalyzed the cytochrome P450 monooxygenase vrtE, a hydroxylation at C12a catalyzed by VrtH and/or VrtI, and an O-methylation by the O-methyltransferase vrtF. VrtC is then proposed to catalyze the transfer of a geranyl group synthesized by vrtD to the aromatic C ring of the tetracyclic polyketide intermediate of viridicatumtoxin to yield previridicatumtoxin. Finally, the cytochrome P450 monooxygenase vrtK catalyzes the spirocyclization of the geranyl moiety of previridicatumtoxin to afford viridicatumtoxin. This chain is Farnesyl pyrophosphate synthase vrtD, found in Penicillium aethiopicum.